Here is a 324-residue protein sequence, read N- to C-terminus: Beta-ketoacyl-[acyl-carrier-protein] synthase III (324 aa).

Residues C113 and H251 contribute to the active site. An ACP-binding region spans residues 252-256 (QANKR). The active site involves N281.

This sequence belongs to the thiolase-like superfamily. FabH family. In terms of assembly, homodimer.

The protein resides in the cytoplasm. The enzyme catalyses malonyl-[ACP] + acetyl-CoA + H(+) = 3-oxobutanoyl-[ACP] + CO2 + CoA. It participates in lipid metabolism; fatty acid biosynthesis. In terms of biological role, catalyzes the condensation reaction of fatty acid synthesis by the addition to an acyl acceptor of two carbons from malonyl-ACP. Catalyzes the first condensation reaction which initiates fatty acid synthesis and may therefore play a role in governing the total rate of fatty acid production. Possesses both acetoacetyl-ACP synthase and acetyl transacylase activities. Its substrate specificity determines the biosynthesis of branched-chain and/or straight-chain of fatty acids. The protein is Beta-ketoacyl-[acyl-carrier-protein] synthase III of Bartonella tribocorum (strain CIP 105476 / IBS 506).